The chain runs to 208 residues: MKVLLKIIVGRAMNILKNFSVPNLCDAGAKPLNGIKPILENQKLVFGEAITVKISYNDWGTLIKTISFAKNKFIVAEVVGEGKYETAVWGGLASLNAKIKGVRGVVIDGCVRDVEDIKALKFPVFAKNFCPNAGKPLNLGEINVAVNCCGVIVEPGDIIVGDCNGVVVIKKESLPEIIENAKNIKEKERKIRERILRGQDLRDVLNLE.

This is an uncharacterized protein from Methanocaldococcus jannaschii (strain ATCC 43067 / DSM 2661 / JAL-1 / JCM 10045 / NBRC 100440) (Methanococcus jannaschii).